We begin with the raw amino-acid sequence, 593 residues long: PiggyBac transposable element-derived protein 3 (593 aa).

Disordered regions lie at residues 27–53 and 69–105; these read IQPPENATAPVSDEESGDEEGGTINNL and SDAESDSDDPSYAPKDDSPDEVPSTFTVQQPPPSRRR. Acidic residues predominate over residues 38-47; the sequence is SDEESGDEEG. The residue at position 86 (Ser86) is a Phosphoserine.

Expressed in heart and oocytes, but not in granulosa cells (at protein level).

It localises to the nucleus. In terms of biological role, binds in vitro to PGBD3-related transposable elements, called MER85s; these non-autonomous 140 bp elements are characterized by the presence of PGBD3 terminal inverted repeats and the absence of internal transposase ORF. This is PiggyBac transposable element-derived protein 3 (PGBD3) from Homo sapiens (Human).